Consider the following 252-residue polypeptide: Cell division protein ZapD (252 aa).

Belongs to the ZapD family. Interacts with FtsZ.

It localises to the cytoplasm. Functionally, cell division factor that enhances FtsZ-ring assembly. Directly interacts with FtsZ and promotes bundling of FtsZ protofilaments, with a reduction in FtsZ GTPase activity. The polypeptide is Cell division protein ZapD (Cupriavidus metallidurans (strain ATCC 43123 / DSM 2839 / NBRC 102507 / CH34) (Ralstonia metallidurans)).